The primary structure comprises 342 residues: Endoplasmic reticulum junction formation protein lunapark-1 (342 aa).

The Cytoplasmic segment spans residues 1 to 39 (MGNLFSRNKSPATELERVALSIDDLKKRLQTISSSNTNT). Positions 13 to 34 (TELERVALSIDDLKKRLQTISS) form a coiled coil. A helical membrane pass occupies residues 40-60 (LYYYYMSIVVILSIAMAHTWL). Over 61-68 (RFEDPQKT) the chain is Lumenal. Residues 69 to 89 (YVACALMLGAIGIVLAGRYVI) form a helical membrane-spanning segment. The Cytoplasmic portion of the chain corresponds to 90–342 (NGFFSWRTNR…ESKTMETEFH (253 aa)). Positions 102–136 (QKLENAISQKTTLLDLVKETLKFKEAKEILDRYEK) form a coiled coil. Residues 161-191 (ADSSMFATPKQEQKRVETPTAQGPNSAMNSM) form a disordered region. Residues 179–191 (PTAQGPNSAMNSM) show a composition bias toward polar residues. A C4-type; plays a role in ER morphology zinc finger spans residues 236–261 (CSICHTHNGMSTPAEYPYISFRCFEC). The disordered stretch occupies residues 278 to 342 (RPPMGPKGIQ…ESKTMETEFH (65 aa)). The segment covering 295–321 (SENTHNMMENQKPSTDLTPSASQNGSE) has biased composition (polar residues). Basic and acidic residues predominate over residues 322 to 342 (KGSDSENEKVPESKTMETEFH).

This sequence belongs to the lunapark family. Expressed in cell bodies along the ventral cord around the pharynx and the tail both in larvae and adults. Also expressed in muscles and hypodermal cells.

Its subcellular location is the endoplasmic reticulum membrane. In terms of biological role, plays a role in tubular endoplasmic reticulum network formation and maintenance. May be involved in central nervous system development. Has a presynaptic role in neurotransmission. Likely to operate in synaptogenesis by regulating vesicular transport or localization. Required for correct localization of rab-3 and snb-1. The sequence is that of Endoplasmic reticulum junction formation protein lunapark-1 (lnp-1) from Caenorhabditis elegans.